Here is a 471-residue protein sequence, read N- to C-terminus: MTNQKQETKLWGGRFAEKTAELVELFNASVGFDQRLAEQDIRGSLAHVAMLGGQGILTAEEVSQITDGLNGVLADIRAGNFEWRLDREDVHMNVEAALRDRIGPVAGKLHTARSRNDQVAVDFRLFTKEAALDLAEQTRALRRVMLAEAEKHLQNEVILPGYTHLQVAQPILLAHWFMAYVAMLERDEGRFRDAAERMDESPLGSSALAGTPWPLDRHATAEALGFARPTANSLDGVGSRDFALEFLSACAILSAHLSRLSEELILYSTFEFGFITLPDSHTTGSSIMPQKKNPDVSELARGKAGRVFGNLMALLTVVKGTPLAYNKDLQEDKEGVFDSYDTLSIVLRLYAEMLPKTVWHADVTKAAAARGYSTATDVADYLARQGVPFREAHEVVGGLVGLASRSDRQLWELTDAELKAAHPLLSAEVAQKLTVEESVRSRQSYGGTAPERVREAVEAAKEKLRQETGQP.

This sequence belongs to the lyase 1 family. Argininosuccinate lyase subfamily.

The protein localises to the cytoplasm. It catalyses the reaction 2-(N(omega)-L-arginino)succinate = fumarate + L-arginine. Its pathway is amino-acid biosynthesis; L-arginine biosynthesis; L-arginine from L-ornithine and carbamoyl phosphate: step 3/3. The sequence is that of Argininosuccinate lyase from Deinococcus radiodurans (strain ATCC 13939 / DSM 20539 / JCM 16871 / CCUG 27074 / LMG 4051 / NBRC 15346 / NCIMB 9279 / VKM B-1422 / R1).